The sequence spans 302 residues: Sulfate adenylyltransferase subunit 2 (302 aa).

Belongs to the PAPS reductase family. CysD subfamily. In terms of assembly, heterodimer composed of CysD, the smaller subunit, and CysN.

It carries out the reaction sulfate + ATP + H(+) = adenosine 5'-phosphosulfate + diphosphate. It participates in sulfur metabolism; hydrogen sulfide biosynthesis; sulfite from sulfate: step 1/3. Functionally, with CysN forms the ATP sulfurylase (ATPS) that catalyzes the adenylation of sulfate producing adenosine 5'-phosphosulfate (APS) and diphosphate, the first enzymatic step in sulfur assimilation pathway. APS synthesis involves the formation of a high-energy phosphoric-sulfuric acid anhydride bond driven by GTP hydrolysis by CysN coupled to ATP hydrolysis by CysD. The polypeptide is Sulfate adenylyltransferase subunit 2 (Zymomonas mobilis subsp. mobilis (strain ATCC 31821 / ZM4 / CP4)).